Reading from the N-terminus, the 515-residue chain is Bifunctional solanapyrone synthase (515 aa).

An N-terminal signal peptide occupies residues 1 to 25 (MRLIILNLLSLGITPSVVGHSGPHR). An N-linked (GlcNAc...) asparagine glycan is attached at asparagine 66. The region spanning 91–261 (APKNPACIYT…THIVQRTYPL (171 aa)) is the FAD-binding PCMH-type domain. Histidine 128 is subject to Pros-8alpha-FAD histidine. N-linked (GlcNAc...) asparagine glycans are attached at residues asparagine 274 and asparagine 355.

It belongs to the oxygen-dependent FAD-linked oxidoreductase family. It depends on FAD as a cofactor.

The catalysed reaction is prosolanapyrone II + O2 = prosolanapyrone III + H2O2. It carries out the reaction prosolanapyrone III = (-)-solanapyrone A. It catalyses the reaction prosolanapyrone III = solanapyrone D. It functions in the pathway phytotoxin biosynthesis. Functionally, bifunctional solanapyrone synthase; part of the gene cluster that mediates the biosynthesis of the phytotoxin solanapyrone, a causal agent of early blight disease of potato and tomato. The prosolanapyrone synthase sol1 is a polyketide synthase that produces the octaketide desmethylprosolanapyrone I via sequential condensations of 7 malonyl-CoA units with one acetyl-CoA unit, and one methylation step. The octaketide backbone is further methylated by the sol2 O-methyltransferase to yield prosolanapyrone I. Prosolanapyrone I is hydroxylated to prosolanapyrone II by the cytochrome P450 monooxygenase sol6. The solanapyrone synthase sol5 then catalyzes the oxidation of prosolanapyrone II and the subsequent Diels Alder cycloisomerization of the product prosolanapyrone III to solanapyrones A and D. Solanapyrones A and D are then converted into solanapyrones B and E, respectively, by the sol3 dehydrogenase. The protein is Bifunctional solanapyrone synthase (sol5) of Alternaria solani.